The sequence spans 517 residues: Cytochrome P450 monooxygenase calE (517 aa).

Asn-8 carries N-linked (GlcNAc...) asparagine glycosylation. Residues 14–34 (SLMHHYILIAILVASIIAMVV) traverse the membrane as a helical segment. Residue Cys-458 coordinates heme.

The protein belongs to the cytochrome P450 family. Heme is required as a cofactor.

Its subcellular location is the membrane. It participates in secondary metabolite biosynthesis. Its function is as follows. Cytochrome P450 monooxygenase; part of the gene cluster that mediates the biosynthesis of calbistrin A and related compounds. Calbistrin A is a secondary metabolite with an interesting structure that was recently found to have bioactivity against leukemia cells. It consists of two polyketides linked by an ester bond: a bicyclic decalin containing polyketide and a linear 12 carbon dioic acid structure. The polyketide synthase calA is probably responsible for forming the decalin moiety. Because calA lacks a designated enoylreductase (ER) domain, the required activity is provided by the trans-enoyl reductase calK. Following release from the PKS, calF then probably catalyzes the oxidation and the subsequent Diels Alder cycloisomerization that lead to the formation of the decalin moiety. The decalin polyketide backbone includes two C-methyl groups, at C7 and C11 in backbone, of which the C7 position is probably methylated by the methyltransferase domain of calA. A candidate for adding the methyl group at C11, if not done by CalA, is the cluster methyltransferase calH. Several additional tailoring enzymes within the cluster could be involved in the modification of the decalin polyketide product. Those include the 3 cytochrome P450 monooxygenases CalE, CalG and CalL, of which one might be responsible for the introduction of the extra hydroxyl group attached to the backbone of the decalin moiety, at position C9 in the backbone, that allows for attachment of the linear moiety. One tailoring enzyme activity that is expected to be involved in biosynthesis of calbistrin is an acyltransferase for connecting the two polyketide synthase products, and which could be performed by the cluster acyltransferase calJ. The enzyme responsible for the biosynthesis of the linear moiety, probably a second PKS, has not been identified yet. This is Cytochrome P450 monooxygenase calE from Penicillium decumbens.